The following is a 262-amino-acid chain: uncharacterized protein (262 aa).

It belongs to the glycosyltransferase 2 family.

This is an uncharacterized protein from Mycobacterium tuberculosis (strain CDC 1551 / Oshkosh).